The sequence spans 182 residues: Molybdopterin synthase catalytic subunit (182 aa).

Residues 119–120, lysine 135, and 142–144 each bind substrate; these read HR and KRE. Residues 152–182 are disordered; it reads VWRANRDGAPGQRIDTAEPAVGAGSGGEIDD.

Belongs to the MoaE family. MOCS2B subfamily. In terms of assembly, heterotetramer; composed of 2 small (MOCS2A) and 2 large (MOCS2B) subunits.

It is found in the cytoplasm. It catalyses the reaction 2 [molybdopterin-synthase sulfur-carrier protein]-C-terminal-Gly-aminoethanethioate + cyclic pyranopterin phosphate + H2O = molybdopterin + 2 [molybdopterin-synthase sulfur-carrier protein]-C-terminal Gly-Gly + 2 H(+). Its pathway is cofactor biosynthesis; molybdopterin biosynthesis. Functionally, catalytic subunit of the molybdopterin synthase complex, a complex that catalyzes the conversion of precursor Z into molybdopterin. Acts by mediating the incorporation of 2 sulfur atoms from thiocarboxylated MOCS2A into precursor Z to generate a dithiolene group. This is Molybdopterin synthase catalytic subunit from Pyricularia oryzae (strain 70-15 / ATCC MYA-4617 / FGSC 8958) (Rice blast fungus).